Here is a 244-residue protein sequence, read N- to C-terminus: uncharacterized protein (244 aa).

This is an uncharacterized protein from Saccharomyces cerevisiae (strain ATCC 204508 / S288c) (Baker's yeast).